We begin with the raw amino-acid sequence, 105 residues long: Integration host factor subunit beta (105 aa).

The protein belongs to the bacterial histone-like protein family. In terms of assembly, heterodimer of an alpha and a beta chain.

Its function is as follows. This protein is one of the two subunits of integration host factor, a specific DNA-binding protein that functions in genetic recombination as well as in transcriptional and translational control. This chain is Integration host factor subunit beta, found in Nitrosomonas eutropha (strain DSM 101675 / C91 / Nm57).